Here is a 339-residue protein sequence, read N- to C-terminus: Heme A synthase (339 aa).

8 consecutive transmembrane segments (helical) span residues 7 to 27, 92 to 112, 126 to 146, 159 to 179, 199 to 219, 254 to 274, 291 to 311, and 312 to 332; these read VIIWLLSGCFLVFIMVVVGGI, HRFIGRIIGLVFIIPFIYFLI, ILLGMGAFQGFLGWFMVKSGL, LHLTFAFITFAYTLWVALDLI, AIIILQIIYGGFVAGLNAGLI, VQFVHRTIAYFVAGLIVFLTF, ALLIIVFIQFTLGVLTLLYSV, and PLWLGVIHQAMAFILLATTTY. Histidine 258 is a binding site for heme. Position 319 (histidine 319) interacts with heme.

It belongs to the COX15/CtaA family. Type 2 subfamily. In terms of assembly, interacts with CtaB. It depends on heme b as a cofactor.

It localises to the cell membrane. It catalyses the reaction Fe(II)-heme o + 2 A + H2O = Fe(II)-heme a + 2 AH2. The protein operates within porphyrin-containing compound metabolism; heme A biosynthesis; heme A from heme O: step 1/1. In terms of biological role, catalyzes the conversion of heme O to heme A by two successive hydroxylations of the methyl group at C8. The first hydroxylation forms heme I, the second hydroxylation results in an unstable dihydroxymethyl group, which spontaneously dehydrates, resulting in the formyl group of heme A. This Flavobacterium psychrophilum (strain ATCC 49511 / DSM 21280 / CIP 103535 / JIP02/86) protein is Heme A synthase.